The chain runs to 160 residues: Transcription antitermination protein NusB (160 aa).

The protein belongs to the NusB family.

Functionally, involved in transcription antitermination. Required for transcription of ribosomal RNA (rRNA) genes. Binds specifically to the boxA antiterminator sequence of the ribosomal RNA (rrn) operons. The protein is Transcription antitermination protein NusB of Rhizobium meliloti (strain 1021) (Ensifer meliloti).